The primary structure comprises 135 residues: Ribonuclease P protein component (135 aa).

The protein belongs to the RnpA family. Consists of a catalytic RNA component (M1 or rnpB) and a protein subunit.

It carries out the reaction Endonucleolytic cleavage of RNA, removing 5'-extranucleotides from tRNA precursor.. Its function is as follows. RNaseP catalyzes the removal of the 5'-leader sequence from pre-tRNA to produce the mature 5'-terminus. It can also cleave other RNA substrates such as 4.5S RNA. The protein component plays an auxiliary but essential role in vivo by binding to the 5'-leader sequence and broadening the substrate specificity of the ribozyme. This chain is Ribonuclease P protein component, found in Xylella fastidiosa (strain Temecula1 / ATCC 700964).